The chain runs to 490 residues: Pre-glycoprotein polyprotein GP complex (490 aa).

Residue Gly2 is the site of N-myristoyl glycine; by host attachment. At 2 to 17 (GQIVTFFQEVPHVIEE) the chain is on the extracellular side. The helical transmembrane segment at 18–33 (VMNIVLIALSILAILK) threads the bilayer. The Cytoplasmic segment spans residues 34–58 (GLYNVATCGLIGLVTFLLLSGRSCS). Position 57 (Cys57) interacts with Zn(2+). Residues 59–431 (LIYKGTYELQ…QGKTPLGLVD (373 aa)) are Extracellular-facing. Asn78, Asn88, Asn98, Asn108, Asn118, and Asn166 each carry an N-linked (GlcNAc...) asparagine; by host glycan. 6 cysteine pairs are disulfide-bonded: Cys85/Cys230, Cys117/Cys154, Cys179/Cys211, Cys278/Cys291, Cys300/Cys309, and Cys363/Cys384. The N-linked (GlcNAc...) asparagine; by host glycan is linked to Asn223. Asn364, Asn372, Asn389, and Asn394 each carry an N-linked (GlcNAc...) asparagine; by host glycan. The helical transmembrane segment at 432–452 (LFVFSTSFYLISIFLHLVKIP) threads the bilayer. At 453–490 (THRHIVGKPCPKPHRLNHMGICSCGLYKQPGVPVRWKR) the chain is on the cytoplasmic side. The Zn(2+) site is built by His454, His456, Cys462, His466, Cys474, and Cys476.

Belongs to the arenaviridae GPC protein family. In terms of assembly, interacts with glycoprotein G2. Part of the GP complex (GP-C) together with glycoprotein G1 and glycoprotein G2. The GP-complex interacts with protein Z, which interacts with ribonucleocapsid; these interactions may induce virion budding. As to quaternary structure, homotrimer; disulfide-linked. In pre-fusion state, G1 homotrimers bind G2 homotrimers via ionic interactions. Part of the GP complex (GP-C) together with glycoprotein G2 and the stable signal peptide. Interacts with the primary host receptor DAG1 on the cell surface; this interaction occurs at pH 8.0 but not at pH 6.0 and below. Upon virus internalization and at endosomal pH, interacts with the host lysosomal protein LAMP1; this interaction mediates G1 dissociation from GP-C and membrane fusion. The GP-complex interacts with protein Z, which interacts with ribonucleocapsid; these interactions may induce virion budding. Homotrimer. Interacts with the stable signal peptide. In pre-fusion state, G2 homotrimers bind G1 homotrimers via ionic interactions. Part of the GP complex (GP-C) together with glycoprotein G1 and the stable signal peptide. Acidification in the endosome triggers rearrangements, which ultimately leads to a 6 helix bundle formed by the two heptad repeat domains (HR1 and HR2) in post-fusion state. The GP-complex interacts with protein Z, which interacts with ribonucleocapsid; these interactions may induce virion budding. Post-translationally, specific enzymatic cleavages in vivo yield mature proteins. GP-C polyprotein is cleaved in the endoplasmic reticulum by the host protease MBTPS1. Only cleaved glycoprotein is incorporated into virions. The SSP remains stably associated with the GP complex following cleavage by signal peptidase and plays crucial roles in the trafficking of GP through the secretory pathway. In terms of processing, myristoylation is necessary for GP2-mediated fusion activity.

Its subcellular location is the virion membrane. It localises to the host endoplasmic reticulum membrane. The protein resides in the host Golgi apparatus membrane. The protein localises to the host cell membrane. Functions as a cleaved signal peptide that is retained as the third component of the GP complex (GP-C). Helps to stabilize the spike complex in its native conformation. The SSP is required for efficient glycoprotein expression, post-translational maturation cleavage of G1 and G2, glycoprotein transport to the cell surface plasma membrane, formation of infectious virus particles, and acid pH-dependent glycoprotein-mediated cell fusion. Functionally, forms the virion spikes together with glycoprotein G2. The glycoprotein spike trimers are connected to the underlying matrix. Interacts with the host receptor. Mediates virus attachment to the host primary receptor alpha-dystroglycan DAG1 (alpha-DG) at the cell surface. This attachment induces virion internalization apparently through macropinocytosis. Following endocytosis, there is a pH-dependent switch from binding DAG1 to the host lysosomal receptor LAMP1. This latter binding triggers the dissociation of GP1, exposing the fusion subunit, GP2, such that fusion can occur. Down-modulates host DAG1. In terms of biological role, forms the virion spikes together with glycoprotein G1. The glycoprotein spike trimers are connected to the underlying matrix. Class I viral fusion protein that directs fusion of viral and host endosomal membranes, leading to delivery of the nucleocapsid into the cytoplasm. Membrane fusion is mediated by irreversible conformational changes induced by acidification. This Lassa virus (strain GA391) (LASV) protein is Pre-glycoprotein polyprotein GP complex.